A 611-amino-acid polypeptide reads, in one-letter code: Putative clathrin assembly protein At4g02650 (611 aa).

Positions 26 to 162 (GRSSSLTELE…DYRMQGRRGK (137 aa)) constitute an ENTH domain. Disordered regions lie at residues 158–184 (GRRG…HRGT) and 337–406 (TTKS…GDLL). Basic and acidic residues predominate over residues 386 to 401 (METKKDVEEVVSRQDQ).

The protein resides in the membrane. It is found in the clathrin-coated pit. It localises to the golgi apparatus. Its subcellular location is the cytoplasmic vesicle. The protein localises to the clathrin-coated vesicle. The protein is Putative clathrin assembly protein At4g02650 of Arabidopsis thaliana (Mouse-ear cress).